The following is a 257-amino-acid chain: Small ribosomal subunit protein uS2 (257 aa).

Positions 229–257 are disordered; sequence QFTPATTSSQEVDKASEQVEIAADDIDEE.

It belongs to the universal ribosomal protein uS2 family.

This is Small ribosomal subunit protein uS2 from Caldicellulosiruptor bescii (strain ATCC BAA-1888 / DSM 6725 / KCTC 15123 / Z-1320) (Anaerocellum thermophilum).